A 324-amino-acid chain; its full sequence is MFSKATLKERRQYYREEWSTKDMPDFILKDLKKREFGFDHNGKGPNDRYKVFRGSESLKKFLRYKAPFAAYISVAFYNNPRRREDWQKAEYIFDVDAKDIPIRSCQCDGVCEVCLGQALEIVNSLIDTLQDDLGLNNIHLVYSGRGYHIRILDEEMMTSGSELRSEVLKYVAGAEVPKSNFFNPDISNKSFNFEHFSIPVGYSKIFTDKLKYNIQHLVGNEELDEINPKLMKDIIKYRHHLDNDNWGYFKRDIGPRRYKNLTEAMARVNLSTIDAKVSIDLKRILRLPSSLHSKVSMKCMEVKNRETFDPLQEAVPKFVEERGE.

Residues aspartate 94, aspartate 96, and aspartate 274 contribute to the active site.

The protein belongs to the eukaryotic-type primase small subunit family. Heterodimer of a small subunit (PriS) and a large subunit (PriL). It depends on Mg(2+) as a cofactor. Mn(2+) serves as cofactor.

Catalytic subunit of DNA primase, an RNA polymerase that catalyzes the synthesis of short RNA molecules used as primers for DNA polymerase during DNA replication. The small subunit contains the primase catalytic core and has DNA synthesis activity on its own. Binding to the large subunit stabilizes and modulates the activity, increasing the rate of DNA synthesis while decreasing the length of the DNA fragments, and conferring RNA synthesis capability. The DNA polymerase activity may enable DNA primase to also catalyze primer extension after primer synthesis. May also play a role in DNA repair. This chain is DNA primase small subunit PriS, found in Methanobrevibacter smithii (strain ATCC 35061 / DSM 861 / OCM 144 / PS).